A 494-amino-acid polypeptide reads, in one-letter code: UPF0371 protein SpyM3_1021 (494 aa).

This sequence belongs to the UPF0371 family.

The polypeptide is UPF0371 protein SpyM3_1021 (Streptococcus pyogenes serotype M3 (strain ATCC BAA-595 / MGAS315)).